A 128-amino-acid chain; its full sequence is Probable 4-amino-4-deoxy-L-arabinose-phosphoundecaprenol flippase subunit ArnF (128 aa).

At 1 to 2 the chain is on the cytoplasmic side; it reads MG. Residues 3–23 form a helical membrane-spanning segment; it reads LIWGLFSVIIASVAQLSLGFA. The Periplasmic segment spans residues 24–35; sequence ASHLPPMTHLWD. Residues 36-56 traverse the membrane as a helical segment; that stretch reads FIAALLAFGLDARILLLGLLG. Over 57-76 the chain is Cytoplasmic; the sequence is YLLSVFCWYKTLHKLALSKA. A helical membrane pass occupies residues 77 to 97; sequence YALLSMSYVLVWIASMVLPGW. Over 98-100 the chain is Periplasmic; it reads EGT. A helical transmembrane segment spans residues 101–121; that stretch reads FSLKALLGVACIMSGLMLIFL. Topologically, residues 122 to 128 are cytoplasmic; it reads PTTKQRY.

It belongs to the ArnF family. In terms of assembly, heterodimer of ArnE and ArnF.

The protein localises to the cell inner membrane. Its pathway is bacterial outer membrane biogenesis; lipopolysaccharide biosynthesis. Functionally, translocates 4-amino-4-deoxy-L-arabinose-phosphoundecaprenol (alpha-L-Ara4N-phosphoundecaprenol) from the cytoplasmic to the periplasmic side of the inner membrane. This Shigella boydii serotype 4 (strain Sb227) protein is Probable 4-amino-4-deoxy-L-arabinose-phosphoundecaprenol flippase subunit ArnF.